Consider the following 220-residue polypeptide: MILIVGLGNPGNEYKNTKHNIGFMLIDELLSSDFSSLKSSKFQGELFKKGEILLLKPQTFMNLSGNSVKAVNDFYKPERIIVIHDDLDLNFGALRFKRGGSSGGHNGIKSIDNLIGNDYERVRIGIGRGQGNAANIVLSKFNNDEDKKLVEILSTAKKAVEFLIKNDINLTSQKFSRKGLKSEILSKNSDDENLNSQNSALKNLIKNVKISQISCSSEKK.

Residue tyrosine 14 coordinates tRNA. The active-site Proton acceptor is histidine 19. Residues phenylalanine 60, asparagine 62, and asparagine 106 each coordinate tRNA.

The protein belongs to the PTH family. As to quaternary structure, monomer.

The protein localises to the cytoplasm. It carries out the reaction an N-acyl-L-alpha-aminoacyl-tRNA + H2O = an N-acyl-L-amino acid + a tRNA + H(+). In terms of biological role, hydrolyzes ribosome-free peptidyl-tRNAs (with 1 or more amino acids incorporated), which drop off the ribosome during protein synthesis, or as a result of ribosome stalling. Its function is as follows. Catalyzes the release of premature peptidyl moieties from peptidyl-tRNA molecules trapped in stalled 50S ribosomal subunits, and thus maintains levels of free tRNAs and 50S ribosomes. The protein is Peptidyl-tRNA hydrolase of Campylobacter hominis (strain ATCC BAA-381 / DSM 21671 / CCUG 45161 / LMG 19568 / NCTC 13146 / CH001A).